A 382-amino-acid chain; its full sequence is Serine/threonine-protein kinase US3 homolog (382 aa).

Basic and acidic residues predominate over residues 1–10 (MENKQCDHLT). The segment at 1-75 (MENKQCDHLT…ASESDEDDDD (75 aa)) is disordered. The span at 12-24 (WFSTTSDASESMD) shows a compositional bias: polar residues. Positions 45 to 75 (ADEDLYSDISEGDLEYSDCDSASESDEDDDD) are enriched in acidic residues. The Protein kinase domain occupies 93 to 379 (YTVIKTLTPG…AEELLSYPMF (287 aa)). Residues 99–107 (LTPGSEGRV) and K122 each bind ATP. Catalysis depends on D207, which acts as the Proton acceptor.

The protein belongs to the protein kinase superfamily. Ser/Thr protein kinase family. In terms of processing, phosphorylated by protein 49; this phosphorylation regulates subsequent phosphorylation of proteins 26 and 29 by US3 homolog. Autophosphorylated.

The protein resides in the host cytoplasm. The protein localises to the host nucleus. The enzyme catalyses L-seryl-[protein] + ATP = O-phospho-L-seryl-[protein] + ADP + H(+). The catalysed reaction is L-threonyl-[protein] + ATP = O-phospho-L-threonyl-[protein] + ADP + H(+). Multifunctional serine/threonine kinase that plays a role in several processes including egress of virus particles from the nucleus, modulation of the actin cytoskeleton and inhibition of apoptosis. Phosphorylates protein 26 and 29, two critical regulators of capsid budding from nucleus to endoplasmic reticulum, thereby facilitating virion egress. Modulates and redistributes host components of the nuclear envelope, including LMNA, emerin/EMD and the nuclear matrix protein MATR3. Phosphorylates envelope glycoprotein B (gB), probably to direct it to the cell surface. Promotes virus intracellular spread by restructuring host cell cytoskeleton. Blocks host apoptosis to extend cell survival and allow efficient viral replication. Promotes viral gene expression by phosphorylating host HDAC2 to reduce viral genome silencing. The chain is Serine/threonine-protein kinase US3 homolog from Equine herpesvirus 1 (strain Ab4p) (EHV-1).